A 316-amino-acid polypeptide reads, in one-letter code: Transaldolase (316 aa).

Lysine 127 (schiff-base intermediate with substrate) is an active-site residue.

This sequence belongs to the transaldolase family. Type 2 subfamily.

The protein localises to the cytoplasm. It carries out the reaction D-sedoheptulose 7-phosphate + D-glyceraldehyde 3-phosphate = D-erythrose 4-phosphate + beta-D-fructose 6-phosphate. Its pathway is carbohydrate degradation; pentose phosphate pathway; D-glyceraldehyde 3-phosphate and beta-D-fructose 6-phosphate from D-ribose 5-phosphate and D-xylulose 5-phosphate (non-oxidative stage): step 2/3. Functionally, transaldolase is important for the balance of metabolites in the pentose-phosphate pathway. This Helicobacter pylori (strain Shi470) protein is Transaldolase.